Reading from the N-terminus, the 172-residue chain is MAHFNECAHLIEGVDKANRAYAENIMHNIDPLQVMLDMQRHLQIRLANDKPETNRHPDSLETAGEVLAWLRNQDDYIADETRELYTSLGGMSNGEKEASAVWKPWKKRYSEMQSKKIQDLSPEDQLEIKFELIDQFHFFMNKFIALGMSAEEIFKLYYLKNAENFARQDRGY.

It catalyses the reaction dCTP + H2O = dCMP + diphosphate + H(+). The protein is dCTP pyrophosphatase (56) of Enterobacteria phage LZ5 (Bacteriophage LZ5).